The sequence spans 569 residues: Endo-1,4-beta-xylanase 5 (569 aa).

The signal sequence occupies residues methionine 1–serine 25. N-linked (GlcNAc...) asparagine glycans are attached at residues asparagine 197, asparagine 261, and asparagine 307. The GH10 domain occupies glutamate 209–lysine 500. Glutamate 332 (proton donor) is an active-site residue. N-linked (GlcNAc...) asparagine glycosylation occurs at asparagine 346. The active-site Nucleophile is glutamate 439. Asparagine 490, asparagine 536, and asparagine 544 each carry an N-linked (GlcNAc...) asparagine glycan.

Belongs to the glycosyl hydrolase 10 (cellulase F) family.

The catalysed reaction is Endohydrolysis of (1-&gt;4)-beta-D-xylosidic linkages in xylans.. It participates in glycan degradation; xylan degradation. Functionally, binds to and hydrolyzes insoluble and soluble xylan substrates. This Arabidopsis thaliana (Mouse-ear cress) protein is Endo-1,4-beta-xylanase 5.